The primary structure comprises 198 residues: Putative coiled-coil domain-containing protein 196 (198 aa).

Residues 24–117 (NYLKELNEDL…RKEMEMLWNK (94 aa)) adopt a coiled-coil conformation. Composition is skewed to basic and acidic residues over residues 135-144 (NKTDLQDGKA) and 154-167 (TKNELETLCAEKGK). The tract at residues 135–198 (NKTDLQDGKA…VSGTSQHHSE (64 aa)) is disordered. The segment covering 187-198 (GQVSGTSQHHSE) has biased composition (polar residues).

In Bos taurus (Bovine), this protein is Putative coiled-coil domain-containing protein 196.